A 272-amino-acid polypeptide reads, in one-letter code: Tryptophan synthase alpha chain (272 aa).

Active-site proton acceptor residues include Glu-49 and Asp-60.

The protein belongs to the TrpA family. In terms of assembly, tetramer of two alpha and two beta chains.

The enzyme catalyses (1S,2R)-1-C-(indol-3-yl)glycerol 3-phosphate + L-serine = D-glyceraldehyde 3-phosphate + L-tryptophan + H2O. The protein operates within amino-acid biosynthesis; L-tryptophan biosynthesis; L-tryptophan from chorismate: step 5/5. Functionally, the alpha subunit is responsible for the aldol cleavage of indoleglycerol phosphate to indole and glyceraldehyde 3-phosphate. This Psychrobacter cryohalolentis (strain ATCC BAA-1226 / DSM 17306 / VKM B-2378 / K5) protein is Tryptophan synthase alpha chain.